A 178-amino-acid chain; its full sequence is Interleukin-10 (178 aa).

The first 18 residues, 1-18, serve as a signal peptide directing secretion; sequence MHSSALLCFLVFLAGVGA. N-linked (GlcNAc...) asparagine glycosylation occurs at N29. Disulfide bonds link C30–C126 and C80–C132. N134 is a glycosylation site (N-linked (GlcNAc...) asparagine).

Belongs to the IL-10 family. In terms of assembly, homodimer. Interacts with IL10RA and IL10RB.

Its subcellular location is the secreted. Functionally, major immune regulatory cytokine that acts on many cells of the immune system where it has profound anti-inflammatory functions, limiting excessive tissue disruption caused by inflammation. Mechanistically, IL10 binds to its heterotetrameric receptor comprising IL10RA and IL10RB leading to JAK1 and STAT2-mediated phosphorylation of STAT3. In turn, STAT3 translocates to the nucleus where it drives expression of anti-inflammatory mediators. Targets antigen-presenting cells (APCs) such as macrophages and monocytes and inhibits their release of pro-inflammatory cytokines including granulocyte-macrophage colony-stimulating factor /GM-CSF, granulocyte colony-stimulating factor/G-CSF, IL-1 alpha, IL-1 beta, IL-6, IL-8 and TNF-alpha. Also interferes with antigen presentation by reducing the expression of MHC-class II and co-stimulatory molecules, thereby inhibiting their ability to induce T cell activation. In addition, controls the inflammatory response of macrophages by reprogramming essential metabolic pathways including mTOR signaling. This chain is Interleukin-10 (IL10), found in Felis catus (Cat).